The sequence spans 1096 residues: Carbamoyl phosphate synthase large chain (1096 aa).

The carboxyphosphate synthetic domain stretch occupies residues 1–402 (MPKRDDINSV…ALQKALRSLE (402 aa)). 12 residues coordinate ATP: Arg129, Arg169, Gly175, Gly176, Glu208, Ile210, Glu215, Gly241, Val242, His243, Gln285, and Glu299. Residues 133-328 (KDLVIESGAD…IAKIAAKLAI (196 aa)) form the ATP-grasp 1 domain. Mg(2+)-binding residues include Gln285, Glu299, and Asn301. Residues Gln285, Glu299, and Asn301 each coordinate Mn(2+). Residues 403–547 (KRGSSFHWGA…YSSYDSETEI (145 aa)) form an oligomerization domain region. Positions 548-950 (VPSDRRKVII…AFAKSQEAAF (403 aa)) are carbamoyl phosphate synthetic domain. In terms of domain architecture, ATP-grasp 2 spans 676 to 870 (SGILDAAGLV…LAKAASLVMV (195 aa)). ATP is bound by residues Arg712, Arg754, Leu756, Glu761, Gly786, Ile787, His788, Ser789, Gln829, and Glu841. Gln829, Glu841, and Asn843 together coordinate Mg(2+). 3 residues coordinate Mn(2+): Gln829, Glu841, and Asn843. Residues 951–1095 (GGLPLSGTVF…QDYAIAREAR (145 aa)) form the MGS-like domain. Residues 951-1096 (GGLPLSGTVF…DYAIAREARR (146 aa)) form an allosteric domain region.

It belongs to the CarB family. In terms of assembly, composed of two chains; the small (or glutamine) chain promotes the hydrolysis of glutamine to ammonia, which is used by the large (or ammonia) chain to synthesize carbamoyl phosphate. Tetramer of heterodimers (alpha,beta)4. The cofactor is Mg(2+). Mn(2+) is required as a cofactor.

The enzyme catalyses hydrogencarbonate + L-glutamine + 2 ATP + H2O = carbamoyl phosphate + L-glutamate + 2 ADP + phosphate + 2 H(+). It catalyses the reaction hydrogencarbonate + NH4(+) + 2 ATP = carbamoyl phosphate + 2 ADP + phosphate + 2 H(+). Its pathway is amino-acid biosynthesis; L-arginine biosynthesis; carbamoyl phosphate from bicarbonate: step 1/1. It participates in pyrimidine metabolism; UMP biosynthesis via de novo pathway; (S)-dihydroorotate from bicarbonate: step 1/3. Its function is as follows. Large subunit of the glutamine-dependent carbamoyl phosphate synthetase (CPSase). CPSase catalyzes the formation of carbamoyl phosphate from the ammonia moiety of glutamine, carbonate, and phosphate donated by ATP, constituting the first step of 2 biosynthetic pathways, one leading to arginine and/or urea and the other to pyrimidine nucleotides. The large subunit (synthetase) binds the substrates ammonia (free or transferred from glutamine from the small subunit), hydrogencarbonate and ATP and carries out an ATP-coupled ligase reaction, activating hydrogencarbonate by forming carboxy phosphate which reacts with ammonia to form carbamoyl phosphate. This chain is Carbamoyl phosphate synthase large chain, found in Clavibacter sepedonicus (Clavibacter michiganensis subsp. sepedonicus).